The sequence spans 232 residues: Ribose-5-phosphate isomerase A (232 aa).

Substrate contacts are provided by residues 31 to 34 (TGST), 88 to 91 (DGAD), and 101 to 104 (KGGG). Catalysis depends on Glu-110, which acts as the Proton acceptor. Lys-128 provides a ligand contact to substrate.

It belongs to the ribose 5-phosphate isomerase family. As to quaternary structure, homodimer.

The enzyme catalyses aldehydo-D-ribose 5-phosphate = D-ribulose 5-phosphate. It participates in carbohydrate degradation; pentose phosphate pathway; D-ribose 5-phosphate from D-ribulose 5-phosphate (non-oxidative stage): step 1/1. Functionally, catalyzes the reversible conversion of ribose-5-phosphate to ribulose 5-phosphate. The protein is Ribose-5-phosphate isomerase A of Lactobacillus johnsonii (strain CNCM I-12250 / La1 / NCC 533).